Reading from the N-terminus, the 228-residue chain is UPF0173 metal-dependent hydrolase Smar_0891 (228 aa).

Belongs to the UPF0173 family.

This Staphylothermus marinus (strain ATCC 43588 / DSM 3639 / JCM 9404 / F1) protein is UPF0173 metal-dependent hydrolase Smar_0891.